Consider the following 47-residue polypeptide: PhoP/PhoQ regulator MgrB (47 aa).

The helical transmembrane segment at 6–26 (WLVLIVVVLACLVLWAQVINI) threads the bilayer.

Belongs to the MgrB family. As to quaternary structure, may form homooligomers. Probably interacts with the periplasmic domain of PhoQ.

The protein resides in the cell inner membrane. Its function is as follows. PhoP-regulated transcription is redox-sensitive, being activated when the periplasm becomes more reducing. MgrB acts between DsbA/DsbB and PhoP/PhoQ in this pathway. Represses PhoP/PhoQ signaling, possibly by binding to the periplasmic domain of PhoQ, altering its activity and that of downstream effector PhoP. The sequence is that of PhoP/PhoQ regulator MgrB from Escherichia fergusonii (strain ATCC 35469 / DSM 13698 / CCUG 18766 / IAM 14443 / JCM 21226 / LMG 7866 / NBRC 102419 / NCTC 12128 / CDC 0568-73).